Consider the following 242-residue polypeptide: Venom nerve growth factor (242 aa).

The first 18 residues, 1–18, serve as a signal peptide directing secretion; the sequence is MSMMCYTLIIAFLIGIWA. The propeptide occupies 19–125; the sequence is APKSEDNVPL…TLNRNIRAKR (107 aa). Positions 47-66 are enriched in basic and acidic residues; the sequence is GLKTSRNTDQRHPAPKKAED. The disordered stretch occupies residues 47–70; it reads GLKTSRNTDQRHPAPKKAEDQELG. Cystine bridges form between Cys139–Cys203, Cys181–Cys231, and Cys191–Cys233. An N-linked (GlcNAc...) asparagine glycan is attached at Asn166.

This sequence belongs to the NGF-beta family. In terms of assembly, homodimer; non-covalently linked. In terms of tissue distribution, expressed by the venom gland.

It localises to the secreted. Its function is as follows. Nerve growth factor is important for the development and maintenance of the sympathetic and sensory nervous systems. It stimulates division and differentiation of sympathetic and embryonic sensory neurons as well as basal forebrain cholinergic neurons in the brain. Its relevance in the snake venom is not clear. However, it has been shown to inhibit metalloproteinase-dependent proteolysis of platelet glycoprotein Ib alpha, suggesting a metalloproteinase inhibition to prevent metalloprotease autodigestion and/or protection against prey proteases. Binds a lipid between the two protein chains in the homodimer. The lipid-bound form promotes histamine relase from mouse mast cells, contrary to the lipid-free form. The polypeptide is Venom nerve growth factor (Drysdalia coronoides (White-lipped snake)).